The chain runs to 412 residues: Phospholipase A1-IIdelta (412 aa).

Ala-2 carries the post-translational modification N-acetylalanine. The active-site Acyl-ester intermediate is Ser-238. Catalysis depends on charge relay system residues Ser-238, Asp-297, and His-336.

Belongs to the AB hydrolase superfamily. Lipase family. In terms of tissue distribution, expressed in leaves, stems, flowers and siliques, and, at low levels, in seeds and roots (at protein level).

The protein localises to the cytoplasm. In terms of biological role, acylhydrolase that catalyzes the hydrolysis of phosphatidylcholine (PC) at the sn-1 position. High activity toward PC, medium activity toward monogalactosyldiacylglycerol (MGDG) and low activity toward triacylglycerol (TAG). Confers sensitivity to UV-B radiation probably by deesterifying membrane phospholipids. The chain is Phospholipase A1-IIdelta from Arabidopsis thaliana (Mouse-ear cress).